The sequence spans 362 residues: Sulfate/thiosulfate import ATP-binding protein CysA (362 aa).

Residues 3-237 enclose the ABC transporter domain; it reads IEINNISKYF…PASRFVMEFL (235 aa). 35–42 contacts ATP; sequence GPSGSGKT.

It belongs to the ABC transporter superfamily. Sulfate/tungstate importer (TC 3.A.1.6) family. As to quaternary structure, the complex is composed of two ATP-binding proteins (CysA), two transmembrane proteins (CysT and CysW) and a solute-binding protein (CysP).

The protein resides in the cell inner membrane. The enzyme catalyses sulfate(out) + ATP + H2O = sulfate(in) + ADP + phosphate + H(+). It catalyses the reaction thiosulfate(out) + ATP + H2O = thiosulfate(in) + ADP + phosphate + H(+). In terms of biological role, part of the ABC transporter complex CysAWTP involved in sulfate/thiosulfate import. Responsible for energy coupling to the transport system. This is Sulfate/thiosulfate import ATP-binding protein CysA from Photorhabdus laumondii subsp. laumondii (strain DSM 15139 / CIP 105565 / TT01) (Photorhabdus luminescens subsp. laumondii).